Reading from the N-terminus, the 540-residue chain is Methionine--tRNA ligase 1 (540 aa).

The 'HIGH' region motif lies at 10-20 (PYANGSLHLGH). Cys-141, Cys-144, Cys-153, and Cys-156 together coordinate Zn(2+). The 'KMSKS' region signature appears at 327-331 (KISTS). Residue Thr-330 participates in ATP binding.

It belongs to the class-I aminoacyl-tRNA synthetase family. MetG type 1 subfamily. As to quaternary structure, monomer. Zn(2+) is required as a cofactor.

It is found in the cytoplasm. The enzyme catalyses tRNA(Met) + L-methionine + ATP = L-methionyl-tRNA(Met) + AMP + diphosphate. Its function is as follows. Is required not only for elongation of protein synthesis but also for the initiation of all mRNA translation through initiator tRNA(fMet) aminoacylation. The sequence is that of Methionine--tRNA ligase 1 from Alkaliphilus oremlandii (strain OhILAs) (Clostridium oremlandii (strain OhILAs)).